A 432-amino-acid polypeptide reads, in one-letter code: Phosphomethylpyrimidine synthase (432 aa).

Residues N66, M95, Y124, H163, 185 to 187 (SRG), 226 to 229 (DGLR), and E265 each bind substrate. Residue H269 coordinates Zn(2+). Y292 is a substrate binding site. Position 333 (H333) interacts with Zn(2+). The [4Fe-4S] cluster site is built by C409, C412, and C416.

It belongs to the ThiC family. The cofactor is [4Fe-4S] cluster.

It catalyses the reaction 5-amino-1-(5-phospho-beta-D-ribosyl)imidazole + S-adenosyl-L-methionine = 4-amino-2-methyl-5-(phosphooxymethyl)pyrimidine + CO + 5'-deoxyadenosine + formate + L-methionine + 3 H(+). The protein operates within cofactor biosynthesis; thiamine diphosphate biosynthesis. Catalyzes the synthesis of the hydroxymethylpyrimidine phosphate (HMP-P) moiety of thiamine from aminoimidazole ribotide (AIR) in a radical S-adenosyl-L-methionine (SAM)-dependent reaction. This chain is Phosphomethylpyrimidine synthase, found in Caldanaerobacter subterraneus subsp. tengcongensis (strain DSM 15242 / JCM 11007 / NBRC 100824 / MB4) (Thermoanaerobacter tengcongensis).